The sequence spans 56 residues: UPF0434 protein CbuK_1382 (56 aa).

Belongs to the UPF0434 family.

The sequence is that of UPF0434 protein CbuK_1382 from Coxiella burnetii (strain CbuK_Q154) (Coxiella burnetii (strain Q154)).